A 347-amino-acid polypeptide reads, in one-letter code: Selenide, water dikinase (347 aa).

Cysteine 16 is an active-site residue. ATP contacts are provided by residues lysine 19 and 47-49 (TRD). Aspartate 50 is a Mg(2+) binding site. Residues aspartate 67, aspartate 90, and 138–140 (GHS) contribute to the ATP site. Aspartate 90 lines the Mg(2+) pocket. Aspartate 226 contributes to the Mg(2+) binding site.

Belongs to the selenophosphate synthase 1 family. Class I subfamily. Homodimer. Mg(2+) is required as a cofactor.

It carries out the reaction hydrogenselenide + ATP + H2O = selenophosphate + AMP + phosphate + 2 H(+). Synthesizes selenophosphate from selenide and ATP. This Photorhabdus laumondii subsp. laumondii (strain DSM 15139 / CIP 105565 / TT01) (Photorhabdus luminescens subsp. laumondii) protein is Selenide, water dikinase.